The chain runs to 718 residues: MAEFEKSISFDGRDIRLKVGLLAPQAGGSVLIESGDTAVLVTATRSPGREGIDFLPLTVDYEERLYAAGRIPGGIMRREGRPPEKTILTSRLIDRPLRPLFPSWLRDDLQVVALTMSMDEQVPPDVLAVTGASIATLIAKIPFNGPMAAVRVGLVGDDFIINPTYAEIEAGDLDLVVAGSPHGVIMVEAGANQLPERDIIEAIDFGYEAVRDLIKAQLDLVAELGLEIVQEAPPEVDQTLENYIRDRASDEIKKILAQFELTKPERDAALDVVKDNIATAIAELPEEDPIRLAATANSKALGNTFKDITKYFMRRQIVEDNVRVDGRKLDQVRPVSSQVGVLPKRVHGSGLFNRGLTQVLSACTLGTPGDAQNLNDDLQTDQSKRYLHHYNFPPFSVGETKPLRAPGRREIGHGALAERAILPVLPPKEQFPYVIRVVSEVLSSNGSTSMGSVCGSTLALMDAGVPILKPVSGAAMGLIKEGDEVRVLTDIQGIEDFLGDMDFKVAGTDAGITALQMDMKISGLSLEVIAQAIHQAKDARLHILDKMLQTIDQPRTETSPYAPRLLTIKIDPDMIGLVIGPGGKTIKGITEETGAKIDIEDDGTVTISAVDENKAKRARNIVQGMTRKLNEGDVYAGRVTRIIPIGAFVEFLPGKEGMIHISQLADYRVGKVEDEVAVGDEVIVKVREIDNKGRINLTRLGIHPDQAAAAREAAAVNR.

Mg(2+) contacts are provided by D496 and D502. The region spanning 563-622 (PRLLTIKIDPDMIGLVIGPGGKTIKGITEETGAKIDIEDDGTVTISAVDENKAKRARNIV) is the KH domain. The 69-residue stretch at 632 to 700 (GDVYAGRVTR…NKGRINLTRL (69 aa)) folds into the S1 motif domain.

As to quaternary structure, may form homodimers or higher order multimers. Interacts with RNase E (rne). Mg(2+) serves as cofactor.

The protein localises to the cytoplasm. The enzyme catalyses RNA(n+1) + phosphate = RNA(n) + a ribonucleoside 5'-diphosphate. In terms of biological role, involved in mRNA degradation. Catalyzes the phosphorolysis of single-stranded polyribonucleotides processively in the 3'- to 5'-direction. The polypeptide is Polyribonucleotide nucleotidyltransferase (Nostoc sp. (strain PCC 7120 / SAG 25.82 / UTEX 2576)).